A 241-amino-acid chain; its full sequence is Endonuclease NucS (241 aa).

Belongs to the NucS endonuclease family.

The protein resides in the cytoplasm. Cleaves both 3' and 5' ssDNA extremities of branched DNA structures. The polypeptide is Endonuclease NucS (Corynebacterium jeikeium (strain K411)).